The sequence spans 432 residues: Pentatricopeptide repeat-containing protein 2, mitochondrial (432 aa).

The N-terminal 33 residues, 1-33 (MQFIKRTFPRRAFVDLLLNRFCLREFATTYSVS), are a transit peptide targeting the mitochondrion. PPR repeat units follow at residues 108 to 142 (KTVAYNLVLQYHLAKGHYNAAWSLYNDMKKRQQKP), 143 to 179 (SDHTYSILLKGFCDAIEKNKQGNFSKLREYSEKVTAS), 360 to 394 (NLQVYHEKLRNLVQQGQAAECLNTIKRMSHNGPFP), and 395 to 429 (TQQTFLIVLSLCKRPKFYSYTKSFLDLAKKLNVPV).

It localises to the mitochondrion. In terms of biological role, mitochondrial RNA-binding protein that acts as a general translation factor. Plays a critical role in the synthesis of all mitochondrial DNA-encoded oxidative phosphorylation subunits, which are essential for mitochondrial respiration. Essential for the expression of iron-sulfur cluster (ISC) proteins as well as other heme proteins related to iron-sensing, and thus plays a key role in iron homeostasis. The chain is Pentatricopeptide repeat-containing protein 2, mitochondrial from Schizosaccharomyces pombe (strain 972 / ATCC 24843) (Fission yeast).